Reading from the N-terminus, the 264-residue chain is Tritrans,polycis-undecaprenyl-diphosphate synthase (geranylgeranyl-diphosphate specific) (264 aa).

The active site involves Asp-43. Asp-43 lines the Mg(2+) pocket. Residues 44 to 47, Trp-48, His-60, and 88 to 90 each bind substrate; these read GNRR and STE. The active-site Proton acceptor is the Asn-91. Residues Phe-92, Arg-94, Arg-213, and 219 to 221 each bind substrate; that span reads RIS. A Mg(2+)-binding site is contributed by Glu-232.

It belongs to the UPP synthase family. As to quaternary structure, homodimer. Mg(2+) serves as cofactor.

The catalysed reaction is geranylgeranyl diphosphate + 7 isopentenyl diphosphate = tri-trans,hepta-cis-undecaprenyl diphosphate + 7 diphosphate. Catalyzes the sequential condensation of isopentenyl diphosphate (IPP) with geranylgeranyl diphosphate (GGPP) to yield (2Z,6Z,10Z,14Z,18Z,22Z,26Z,30E,34E,38E)-undecaprenyl diphosphate (tritrans,heptacis-UPP). It is probably the precursor of glycosyl carrier lipids. The polypeptide is Tritrans,polycis-undecaprenyl-diphosphate synthase (geranylgeranyl-diphosphate specific) (Pyrococcus furiosus (strain ATCC 43587 / DSM 3638 / JCM 8422 / Vc1)).